Consider the following 66-residue polypeptide: UPF0434 protein M446_0487 (66 aa).

It belongs to the UPF0434 family.

This chain is UPF0434 protein M446_0487, found in Methylobacterium sp. (strain 4-46).